A 179-amino-acid polypeptide reads, in one-letter code: Transcription factor 21 (179 aa).

The segment at 20–86 (CDGIKLDPNK…KQVQRNAANA (67 aa)) is disordered. Polar residues predominate over residues 34–46 (SNDSNEESSTCDN). Positions 50 to 64 (KKGRGTSGKRRKASS) are enriched in basic residues. Residues 70-80 (GTINQEGKQVQ) show a composition bias toward polar residues. Positions 79-131 (VQRNAANARERARMRVLSKAFSRLKTTLPWVPPDTKLSKLDTLRLASSYIAHL) constitute a bHLH domain.

In terms of assembly, efficient DNA binding requires dimerization with another bHLH protein. As to expression, at the start of neurulation (stage 13), expressed in the pronephros. At tailbud stage (stage 25-28), expression is high in the anterior-most branchial arch and pronephric glomus. At stage 40, staining persists in the glomus and in the epicardium region of the heart, and at stage 42, expression is higher in the glomus than in the kidney tubule or duct. In adults, expression is highest in the rectum and the spleen, with significant expression in the duodenum, heart, kidney, lungs, pancreas, skin, liver and muscle.

Its subcellular location is the nucleus. Its function is as follows. Involved in epithelial-mesenchymal interactions in kidney and lung morphogenesis that include epithelial differentiation and branching morphogenesis. This is Transcription factor 21 (tcf21) from Xenopus laevis (African clawed frog).